A 243-amino-acid polypeptide reads, in one-letter code: Ribosomal RNA small subunit methyltransferase G (243 aa).

S-adenosyl-L-methionine-binding positions include Gly-80, Phe-85, 132–133, and Arg-151; that span reads IE.

It belongs to the methyltransferase superfamily. RNA methyltransferase RsmG family.

The protein localises to the cytoplasm. Functionally, specifically methylates the N7 position of a guanine in 16S rRNA. This Synechococcus sp. (strain CC9902) protein is Ribosomal RNA small subunit methyltransferase G.